A 197-amino-acid polypeptide reads, in one-letter code: MTSPILTGIFGGSFDPPHEGHSGILKSFFREVPDCREIFLIPNRQNPLKGEKFSSSENILEMLNLFVSEFSETIRILDLELNHPGPSYTIETIQKLKTLHPNREFVLLIGEDNYSNFHKWRNYEKILDEVRKVFVFRRFSEVVPRNSKLFSQFQFLKNPLIPASSTDLRQSFFQSTIPDRIPKKVLDYILRNRLYSK.

The protein belongs to the NadD family.

It catalyses the reaction nicotinate beta-D-ribonucleotide + ATP + H(+) = deamido-NAD(+) + diphosphate. Its pathway is cofactor biosynthesis; NAD(+) biosynthesis; deamido-NAD(+) from nicotinate D-ribonucleotide: step 1/1. Catalyzes the reversible adenylation of nicotinate mononucleotide (NaMN) to nicotinic acid adenine dinucleotide (NaAD). The sequence is that of Probable nicotinate-nucleotide adenylyltransferase from Leptospira borgpetersenii serovar Hardjo-bovis (strain JB197).